A 173-amino-acid polypeptide reads, in one-letter code: Large ribosomal subunit protein uL10 (173 aa).

Belongs to the universal ribosomal protein uL10 family. As to quaternary structure, part of the ribosomal stalk of the 50S ribosomal subunit. The N-terminus interacts with L11 and the large rRNA to form the base of the stalk. The C-terminus forms an elongated spine to which L12 dimers bind in a sequential fashion forming a multimeric L10(L12)X complex.

Functionally, forms part of the ribosomal stalk, playing a central role in the interaction of the ribosome with GTP-bound translation factors. This is Large ribosomal subunit protein uL10 from Oleidesulfovibrio alaskensis (strain ATCC BAA-1058 / DSM 17464 / G20) (Desulfovibrio alaskensis).